The chain runs to 138 residues: Protein Rrf1 (138 aa).

The Response regulatory domain maps to 4–116 (RILVVQEDPD…LLLALVDRAL (113 aa)). 4-aspartylphosphate occurs at positions 13 and 53.

Its function is as follows. May be involved in regulation of gene transcription. Belongs to the family of response regulators, and members of this family involved in the regulation of gene transcription are two-domain proteins. This protein contains only the N-terminal phosphorylation domain and not the C-terminal DNA-binding domain but it may bind to Rrf2 protein and the latter may bind to DNA. The chain is Protein Rrf1 (rrf1) from Nitratidesulfovibrio vulgaris (strain ATCC 29579 / DSM 644 / CCUG 34227 / NCIMB 8303 / VKM B-1760 / Hildenborough) (Desulfovibrio vulgaris).